We begin with the raw amino-acid sequence, 205 residues long: Recombination protein RecR (205 aa).

The segment at 59-74 adopts a C4-type zinc-finger fold; it reads CAMCNTFCEGGLCDIC. A Toprim domain is found at 82 to 177; that stretch reads RRLMVVHMPA…KVSRLSQGIP (96 aa).

The protein belongs to the RecR family.

In terms of biological role, may play a role in DNA repair. It seems to be involved in an RecBC-independent recombinational process of DNA repair. It may act with RecF and RecO. The sequence is that of Recombination protein RecR from Neisseria meningitidis serogroup C (strain 053442).